The primary structure comprises 508 residues: Lysine--tRNA ligase (508 aa).

Positions 418 and 425 each coordinate Mg(2+).

The protein belongs to the class-II aminoacyl-tRNA synthetase family. Homodimer. Mg(2+) serves as cofactor.

The protein localises to the cytoplasm. The catalysed reaction is tRNA(Lys) + L-lysine + ATP = L-lysyl-tRNA(Lys) + AMP + diphosphate. The polypeptide is Lysine--tRNA ligase (Burkholderia vietnamiensis (strain G4 / LMG 22486) (Burkholderia cepacia (strain R1808))).